A 323-amino-acid polypeptide reads, in one-letter code: E3 ubiquitin-protein ligase SIRP1 (323 aa).

The RING-type; atypical zinc finger occupies 199–240; that stretch reads CSVCLDDLEVGSQAKQMPCEHKFHSSCILPWLELHSSCPVCR. Disordered regions lie at residues 248–280 and 296–323; these read TKDL…ESSN and REAQ…AGHS. Residues 259–269 are compositionally biased toward basic and acidic residues; sequence RVEDSHEEVRA.

It is found in the cytoplasm. The enzyme catalyses S-ubiquitinyl-[E2 ubiquitin-conjugating enzyme]-L-cysteine + [acceptor protein]-L-lysine = [E2 ubiquitin-conjugating enzyme]-L-cysteine + N(6)-ubiquitinyl-[acceptor protein]-L-lysine.. The protein operates within protein modification; protein ubiquitination. Possesses E3 ubiqutin-protein ligase activity in vitro. Acts as negative regulator of salinity stress tolerance mediated by the ubiquitin-proteasome degradation pathway. The sequence is that of E3 ubiquitin-protein ligase SIRP1 from Oryza sativa subsp. japonica (Rice).